The chain runs to 427 residues: Serine hydroxymethyltransferase (427 aa).

120 to 122 contributes to the (6S)-5,6,7,8-tetrahydrofolate binding site; the sequence is GHI. Position 226 is an N6-(pyridoxal phosphate)lysine (Lys226).

The protein belongs to the SHMT family. Homodimer. Pyridoxal 5'-phosphate serves as cofactor.

It is found in the cytoplasm. The protein operates within amino-acid biosynthesis; glycine biosynthesis; glycine from L-serine: step 1/1. Catalyzes the reversible interconversion of serine and glycine with a modified folate serving as the one-carbon carrier. Also exhibits a pteridine-independent aldolase activity toward beta-hydroxyamino acids, producing glycine and aldehydes, via a retro-aldol mechanism. In Pyrococcus abyssi (strain GE5 / Orsay), this protein is Serine hydroxymethyltransferase.